Consider the following 763-residue polypeptide: F-box protein SKP2 (763 aa).

The 47-residue stretch at 54 to 100 (KSSLMCLPTKVLLLILRTLDFNTLVTLCQVNSRFYNLITNEFLFQNV) folds into the F-box domain. At threonine 594 the chain carries Phosphothreonine.

As to quaternary structure, interacts with SKP1. Component of the probable SCF(SKP2) complex containing CDC53, SKP1, RBX1 and SKP2. May interact with ribosomes.

The protein resides in the cytoplasm. Its pathway is protein modification; protein ubiquitination. Substrate recognition component of a SCF (SKP1-CUL1-F-box protein) E3 ubiquitin-protein ligase complex which mediates the ubiquitination and subsequent proteasomal degradation of target proteins. Probably recognizes and binds to phosphorylated target proteins. Regulates protein levels of sulfur metabolism enzymes. The SCF(SKP2) complex may regulate some transcription factors or regulators of cysteine and methionine biosynthesis. The chain is F-box protein SKP2 (SKP2) from Saccharomyces cerevisiae (strain ATCC 204508 / S288c) (Baker's yeast).